A 276-amino-acid chain; its full sequence is uncharacterized protein (276 aa).

One can recognise an AB hydrolase-1 domain in the interval 20–137 (PVLIFIPGAN…PPINTFLPDS (118 aa)). The disordered stretch occupies residues 57-76 (GESELTEPLPDSASNPDSDY).

This sequence belongs to the AB hydrolase superfamily.

This is an uncharacterized protein from Staphylococcus aureus (strain N315).